A 49-amino-acid chain; its full sequence is DNA-directed RNA polymerase subunit Rpo12 (49 aa).

Zn(2+) is bound by residues Cys-11, Cys-27, and Cys-30.

This sequence belongs to the archaeal Rpo12/eukaryotic RPC10 RNA polymerase subunit family. In terms of assembly, part of the RNA polymerase complex. Zn(2+) serves as cofactor.

It is found in the cytoplasm. It carries out the reaction RNA(n) + a ribonucleoside 5'-triphosphate = RNA(n+1) + diphosphate. Functionally, DNA-dependent RNA polymerase (RNAP) catalyzes the transcription of DNA into RNA using the four ribonucleoside triphosphates as substrates. This Pyrococcus furiosus (strain ATCC 43587 / DSM 3638 / JCM 8422 / Vc1) protein is DNA-directed RNA polymerase subunit Rpo12.